The primary structure comprises 1839 residues: Nuclear pore complex protein DDB_G0274915 (1839 aa).

Composition is skewed to polar residues over residues 1–27 (MNGRIRQNQTAYNPYSTSGRNNRNTIN) and 35–54 (NGSLLMNGSSSPPNNQQTNK). Disordered regions lie at residues 1 to 54 (MNGR…QTNK), 78 to 150 (DESS…ISDD), 325 to 367 (KQFD…PNAD), 480 to 568 (PLNK…FSTT), 589 to 636 (TTIA…GGGV), 657 to 705 (VSTS…DVPG), 739 to 810 (TTTT…DSKT), 818 to 837 (PTTEGLFSKPTTSLTSSSLF), 846 to 1106 (TTPS…FSSN), and 1129 to 1839 (TTAT…AKKK). Positions 80–90 (SSSSSSSSSSS) are enriched in low complexity. Positions 91-101 (YDDGNNIPQKG) are enriched in polar residues. Composition is skewed to low complexity over residues 102–148 (SSTT…INIS) and 329–343 (DNNNSNINDNQSIYN). Residues 344–354 (RQSIYSPNSKI) are compositionally biased toward polar residues. Low complexity-rich tracts occupy residues 495-568 (TYAT…FSTT) and 589-607 (TTIATSSPSTSTSTSSSSS). The segment covering 616-628 (MFTSDSNKSNLFS) has biased composition (polar residues). Composition is skewed to low complexity over residues 658–671 (STSTSSSTSTSKSS) and 739–760 (TTTTASSSSSSSLFSSPPTTDK). The segment covering 761–773 (SSADKSSADKSST) has biased composition (basic and acidic residues). Low complexity-rich tracts occupy residues 774 to 803 (DKSTSPVTTSIPSFTSSSTSTSLFGPTTTT), 827 to 837 (PTTSLTSSSLF), and 846 to 871 (TTPSIFGDASKSSTSTSLFGSSNTTT). 2 stretches are compositionally biased toward acidic residues: residues 896–923 (ESDEEDEENEGDEGDEEGDENGELEAEE) and 944–958 (LEAEEEFYVPPDSDE). Low complexity-rich tracts occupy residues 1005-1021 (GSSLFSGGSLLTSSFLT) and 1046-1060 (SSSSSTSSNIIIPTT). Positions 1061–1070 (SKKEKIDDKP) are enriched in basic and acidic residues. The span at 1071–1092 (STTTTTTTTSLFGSTTTSGLFS) shows a compositional bias: low complexity. The span at 1093 to 1106 (NPSTTSTGSLFSSN) shows a compositional bias: polar residues. 2 stretches are compositionally biased toward low complexity: residues 1129–1242 (TTAT…FGST) and 1250–1292 (ATTT…GLFG). Over residues 1293–1310 (ASSSTTPSTGLFGSATTP) the composition is skewed to polar residues. Low complexity-rich tracts occupy residues 1311 to 1384 (STGL…TTPP) and 1397 to 1498 (LFGT…TTAT). Residues 1507–1521 (TAPSTGLFGSTTATN) show a composition bias toward polar residues. Over residues 1522–1673 (PSTGLFGSTT…SSTPFGASPF (152 aa)) the composition is skewed to low complexity. The segment covering 1676-1708 (PTSTSSPPFGAPTSASSTPFGAPQISTSSSTNL) has biased composition (polar residues). Residues 1712-1810 (ASSSTAAPSF…PFGSTPSTAP (99 aa)) are compositionally biased toward low complexity.

The sequence is that of Nuclear pore complex protein DDB_G0274915 from Dictyostelium discoideum (Social amoeba).